Here is a 358-residue protein sequence, read N- to C-terminus: Probable branched-chain-amino-acid aminotransferase (358 aa).

Lys-196 carries the post-translational modification N6-(pyridoxal phosphate)lysine.

The protein belongs to the class-IV pyridoxal-phosphate-dependent aminotransferase family. It depends on pyridoxal 5'-phosphate as a cofactor.

It catalyses the reaction L-leucine + 2-oxoglutarate = 4-methyl-2-oxopentanoate + L-glutamate. The catalysed reaction is L-isoleucine + 2-oxoglutarate = (S)-3-methyl-2-oxopentanoate + L-glutamate. The enzyme catalyses L-valine + 2-oxoglutarate = 3-methyl-2-oxobutanoate + L-glutamate. The protein operates within amino-acid biosynthesis; L-isoleucine biosynthesis; L-isoleucine from 2-oxobutanoate: step 4/4. Its pathway is amino-acid biosynthesis; L-leucine biosynthesis; L-leucine from 3-methyl-2-oxobutanoate: step 4/4. It functions in the pathway amino-acid biosynthesis; L-valine biosynthesis; L-valine from pyruvate: step 4/4. Its function is as follows. Acts on leucine, isoleucine and valine. This chain is Probable branched-chain-amino-acid aminotransferase (ilvE), found in Staphylococcus aureus (strain MRSA252).